A 251-amino-acid chain; its full sequence is tRNA-uridine aminocarboxypropyltransferase 2 (251 aa).

Zn(2+)-binding residues include cysteine 23, cysteine 26, cysteine 33, and cysteine 35. Residues 131 to 134 (DGTW) carry the DXTW motif.

It belongs to the TDD superfamily. DTWD2 family.

It catalyses the reaction a uridine in tRNA + S-adenosyl-L-methionine = a 3-[(3S)-3-amino-3-carboxypropyl]uridine in tRNA + S-methyl-5'-thioadenosine + H(+). Catalyzes the formation of 3-(3-amino-3-carboxypropyl)uridine (acp3U) at position 20a in the D-loop of several cytoplasmic tRNAs (acp3U(20a)). This Drosophila melanogaster (Fruit fly) protein is tRNA-uridine aminocarboxypropyltransferase 2.